The sequence spans 201 residues: Lipopolysaccharide core heptose(II)-phosphate phosphatase (201 aa).

The signal sequence occupies residues 1–35; sequence MLAFTLRFIKNKRYLATLAGALVIIAGLTSQHAWS.

Belongs to the phosphoglycerate mutase family. Ais subfamily.

It localises to the periplasm. The protein operates within bacterial outer membrane biogenesis; lipopolysaccharide metabolism. Catalyzes the dephosphorylation of heptose(II) of the outer membrane lipopolysaccharide core. The polypeptide is Lipopolysaccharide core heptose(II)-phosphate phosphatase (Salmonella paratyphi A (strain AKU_12601)).